We begin with the raw amino-acid sequence, 241 residues long: Demethylmenaquinone methyltransferase (241 aa).

S-adenosyl-L-methionine contacts are provided by Thr73 and Asp92.

The protein belongs to the class I-like SAM-binding methyltransferase superfamily. MenG/UbiE family.

It catalyses the reaction a 2-demethylmenaquinol + S-adenosyl-L-methionine = a menaquinol + S-adenosyl-L-homocysteine + H(+). It participates in quinol/quinone metabolism; menaquinone biosynthesis; menaquinol from 1,4-dihydroxy-2-naphthoate: step 2/2. Functionally, methyltransferase required for the conversion of demethylmenaquinol (DMKH2) to menaquinol (MKH2). This Chlorobaculum parvum (strain DSM 263 / NCIMB 8327) (Chlorobium vibrioforme subsp. thiosulfatophilum) protein is Demethylmenaquinone methyltransferase.